We begin with the raw amino-acid sequence, 534 residues long: MDAFSGSGLKRKFDDVDVGSSVSNSDDEMSSSDSADSCDSLNPPTTASFTPTSILKRQKQLRRKNVRFDQVTVYYFARRQGFTSVPSQGGSSLGMAQRHNSVRSYTLCEFAQEQEVNHREILREHLKEEKLHAKKMKLTKNGTVESVEADGLTLDDVSDEDIDVENVEVDDYFFLQPLPTKRRRALLRASGVHRIDAEEKQELRAIRLSREECGCDCRLYCDPEACACSQAGIKCQVDRMSFPCGCSRDGCGNMAGRIEFNPIRVRTHYLHTIMKLELESKRQVSRPAAEEEPLPGAQSSQTQDFQEFIAENETAVMHLQSAEELERLKAEEDSSGSSASLDSSMESLGVCILEEPLAVPQELCPGLAAPILIQAQLPPGSSVLCFTENSEHPAASPMSSPSYLNSGPLVYYQVEQRPVVGVKAESGSEEGPASFPKEKDLSVFSLPVTSLVACGPSASAALCKPEVGKTSSLNKLLPEDCGLKEPESEDLHPSWSPSSLPFRTDNEEGCGVQNSQQSEDRTSEDSALELPLAV.

Met1 is modified (N-acetylmethionine). Disordered regions lie at residues 1-52 (MDAF…FTPT) and 480-534 (DCGL…PLAV). Over residues 31–40 (SSDSADSCDS) the composition is skewed to low complexity. Residues 42–52 (NPPTTASFTPT) show a composition bias toward polar residues. A compositionally biased stretch (basic and acidic residues) spans 480–492 (DCGLKEPESEDLH).

Belongs to the AXUD1 family. As to expression, highest expression detected in thymus, brain and ovary. Low levels detected in naive T-cells.

Its subcellular location is the nucleus. Its function is as follows. Binds to the consensus sequence 5'-AGAGTG-3' and has transcriptional activator activity. May play a role in apoptosis. This Mus musculus (Mouse) protein is Cysteine/serine-rich nuclear protein 2 (Csrnp2).